Consider the following 842-residue polypeptide: Protein P (842 aa).

A terminal protein domain (TP) region spans residues 1-177; that stretch reads MPLSYQHFRK…FCGSPYSWEQ (177 aa). Positions 178–346 are spacer; the sequence is ELQHGRLVFQ…YCLTHIVNLL (169 aa). A disordered region spans residues 218 to 274; it reads LKQSRLGLQPQQGSLARGKSGRSGSIRARVPPTTRRSFGVEPSGSGHIDNRASSTSS. A polymerase/reverse transcriptase domain (RT) region spans residues 347-690; that stretch reads EDWGPCTEHG…YLHLYPVARR (344 aa). The Reverse transcriptase domain maps to 357-600; the sequence is EHNIRIPRTP…YSLNFMGYVI (244 aa). Mg(2+)-binding residues include Asp-429, Asp-551, and Asp-552.

Belongs to the hepadnaviridae P protein family.

It carries out the reaction DNA(n) + a 2'-deoxyribonucleoside 5'-triphosphate = DNA(n+1) + diphosphate. It catalyses the reaction Endonucleolytic cleavage to 5'-phosphomonoester.. Its activity is regulated as follows. Activated by host HSP70 and HSP40 in vitro to be able to bind the epsilon loop of the pgRNA. Because deletion of the RNase H region renders the protein partly chaperone-independent, the chaperones may be needed indirectly to relieve occlusion of the RNA-binding site by this domain. Inhibited by several reverse-transcriptase inhibitors: Lamivudine, Adefovir and Entecavir. Functionally, multifunctional enzyme that converts the viral RNA genome into dsDNA in viral cytoplasmic capsids. This enzyme displays a DNA polymerase activity that can copy either DNA or RNA templates, and a ribonuclease H (RNase H) activity that cleaves the RNA strand of RNA-DNA heteroduplexes in a partially processive 3'- to 5'-endonucleasic mode. Neo-synthesized pregenomic RNA (pgRNA) are encapsidated together with the P protein, and reverse-transcribed inside the nucleocapsid. Initiation of reverse-transcription occurs first by binding the epsilon loop on the pgRNA genome, and is initiated by protein priming, thereby the 5'-end of (-)DNA is covalently linked to P protein. Partial (+)DNA is synthesized from the (-)DNA template and generates the relaxed circular DNA (RC-DNA) genome. After budding and infection, the RC-DNA migrates in the nucleus, and is converted into a plasmid-like covalently closed circular DNA (cccDNA). The activity of P protein does not seem to be necessary for cccDNA generation, and is presumably released from (+)DNA by host nuclear DNA repair machinery. The sequence is that of Protein P from Hepatitis B virus genotype C subtype adr (isolate Korea/Kim/1989) (HBV-C).